The chain runs to 290 residues: 33 kDa chaperonin (290 aa).

Disulfide bonds link Cys235–Cys237 and Cys268–Cys271.

It belongs to the HSP33 family. Under oxidizing conditions two disulfide bonds are formed involving the reactive cysteines. Under reducing conditions zinc is bound to the reactive cysteines and the protein is inactive.

The protein resides in the cytoplasm. Its function is as follows. Redox regulated molecular chaperone. Protects both thermally unfolding and oxidatively damaged proteins from irreversible aggregation. Plays an important role in the bacterial defense system toward oxidative stress. This Streptococcus pyogenes serotype M28 (strain MGAS6180) protein is 33 kDa chaperonin.